We begin with the raw amino-acid sequence, 360 residues long: Phospho-N-acetylmuramoyl-pentapeptide-transferase (360 aa).

The next 10 membrane-spanning stretches (helical) occupy residues 26-46 (AIVSLLTALFISLWMGPRMIA), 72-92 (PTMGGIMILTAITVSVLLWAY), 94-114 (SNPYVWCVLTVLIGYGIIGFV), 132-152 (WKYFWMSVIALGVAFALYLAG), 168-188 (VMPQLGLFYILLAYFVIVGTG), 199-219 (GLAIMPTVFVAAGFALVAWAT), 236-256 (AGELVIVCTAIVGAGLGFLWF), 263-283 (VFMGDVGSLALGGALGIIAVL), 288-308 (FLLVIMGGVFVVETLSVILQV), and 338-358 (VIVRFWIISLMLVLIGLATLK).

This sequence belongs to the glycosyltransferase 4 family. MraY subfamily. Mg(2+) is required as a cofactor.

The protein resides in the cell inner membrane. The catalysed reaction is UDP-N-acetyl-alpha-D-muramoyl-L-alanyl-gamma-D-glutamyl-meso-2,6-diaminopimeloyl-D-alanyl-D-alanine + di-trans,octa-cis-undecaprenyl phosphate = di-trans,octa-cis-undecaprenyl diphospho-N-acetyl-alpha-D-muramoyl-L-alanyl-D-glutamyl-meso-2,6-diaminopimeloyl-D-alanyl-D-alanine + UMP. Its pathway is cell wall biogenesis; peptidoglycan biosynthesis. Its function is as follows. Catalyzes the initial step of the lipid cycle reactions in the biosynthesis of the cell wall peptidoglycan: transfers peptidoglycan precursor phospho-MurNAc-pentapeptide from UDP-MurNAc-pentapeptide onto the lipid carrier undecaprenyl phosphate, yielding undecaprenyl-pyrophosphoryl-MurNAc-pentapeptide, known as lipid I. This is Phospho-N-acetylmuramoyl-pentapeptide-transferase from Klebsiella pneumoniae subsp. pneumoniae (strain ATCC 700721 / MGH 78578).